A 223-amino-acid chain; its full sequence is Phosphoribosylformylglycinamidine synthase subunit PurQ (223 aa).

In terms of domain architecture, Glutamine amidotransferase type-1 spans 4–223; it reads FAVIVFPGTN…FKSIVEWMKK (220 aa). Residue cysteine 85 is the Nucleophile of the active site. Active-site residues include histidine 196 and glutamate 198.

In terms of assembly, part of the FGAM synthase complex composed of 1 PurL, 1 PurQ and 2 PurS subunits.

Its subcellular location is the cytoplasm. It carries out the reaction N(2)-formyl-N(1)-(5-phospho-beta-D-ribosyl)glycinamide + L-glutamine + ATP + H2O = 2-formamido-N(1)-(5-O-phospho-beta-D-ribosyl)acetamidine + L-glutamate + ADP + phosphate + H(+). It catalyses the reaction L-glutamine + H2O = L-glutamate + NH4(+). The protein operates within purine metabolism; IMP biosynthesis via de novo pathway; 5-amino-1-(5-phospho-D-ribosyl)imidazole from N(2)-formyl-N(1)-(5-phospho-D-ribosyl)glycinamide: step 1/2. Part of the phosphoribosylformylglycinamidine synthase complex involved in the purines biosynthetic pathway. Catalyzes the ATP-dependent conversion of formylglycinamide ribonucleotide (FGAR) and glutamine to yield formylglycinamidine ribonucleotide (FGAM) and glutamate. The FGAM synthase complex is composed of three subunits. PurQ produces an ammonia molecule by converting glutamine to glutamate. PurL transfers the ammonia molecule to FGAR to form FGAM in an ATP-dependent manner. PurS interacts with PurQ and PurL and is thought to assist in the transfer of the ammonia molecule from PurQ to PurL. This chain is Phosphoribosylformylglycinamidine synthase subunit PurQ, found in Pyrococcus horikoshii (strain ATCC 700860 / DSM 12428 / JCM 9974 / NBRC 100139 / OT-3).